The primary structure comprises 334 residues: Phospho-N-acetylmuramoyl-pentapeptide-transferase (334 aa).

The next 10 membrane-spanning stretches (helical) occupy residues 2-22, 55-75, 78-98, 116-136, 154-174, 187-207, 211-231, 236-256, 262-282, and 311-331; these read IPVL…GPVV, VIFL…PGGV, GWIE…LGFM, EKLL…VFVL, GLAL…VVLA, GLAA…ALVM, WVGI…CYNF, VFMG…AAVI, FLLI…IQVI, and VVLT…AGLK.

This sequence belongs to the glycosyltransferase 4 family. MraY subfamily. Mg(2+) is required as a cofactor.

It localises to the cell membrane. The enzyme catalyses UDP-N-acetyl-alpha-D-muramoyl-L-alanyl-gamma-D-glutamyl-meso-2,6-diaminopimeloyl-D-alanyl-D-alanine + di-trans,octa-cis-undecaprenyl phosphate = di-trans,octa-cis-undecaprenyl diphospho-N-acetyl-alpha-D-muramoyl-L-alanyl-D-glutamyl-meso-2,6-diaminopimeloyl-D-alanyl-D-alanine + UMP. It functions in the pathway cell wall biogenesis; peptidoglycan biosynthesis. Catalyzes the initial step of the lipid cycle reactions in the biosynthesis of the cell wall peptidoglycan: transfers peptidoglycan precursor phospho-MurNAc-pentapeptide from UDP-MurNAc-pentapeptide onto the lipid carrier undecaprenyl phosphate, yielding undecaprenyl-pyrophosphoryl-MurNAc-pentapeptide, known as lipid I. The polypeptide is Phospho-N-acetylmuramoyl-pentapeptide-transferase (Desulforudis audaxviator (strain MP104C)).